The following is a 331-amino-acid chain: RNA 3'-terminal phosphate cyclase (331 aa).

Residues Gln-100 and 276 to 280 (HLADQ) each bind ATP. The active-site Tele-AMP-histidine intermediate is His-301.

Belongs to the RNA 3'-terminal cyclase family. Type 1 subfamily.

It is found in the cytoplasm. The enzyme catalyses a 3'-end 3'-phospho-ribonucleotide-RNA + ATP = a 3'-end 2',3'-cyclophospho-ribonucleotide-RNA + AMP + diphosphate. In terms of biological role, catalyzes the conversion of 3'-phosphate to a 2',3'-cyclic phosphodiester at the end of RNA. The mechanism of action of the enzyme occurs in 3 steps: (A) adenylation of the enzyme by ATP; (B) transfer of adenylate to an RNA-N3'P to produce RNA-N3'PP5'A; (C) and attack of the adjacent 2'-hydroxyl on the 3'-phosphorus in the diester linkage to produce the cyclic end product. The biological role of this enzyme is unknown but it is likely to function in some aspects of cellular RNA processing. This chain is RNA 3'-terminal phosphate cyclase, found in Methanococcoides burtonii (strain DSM 6242 / NBRC 107633 / OCM 468 / ACE-M).